A 1291-amino-acid chain; its full sequence is Histone-lysine N-methyltransferase SETDB1 (1291 aa).

A coiled-coil region spans residues 18–64 (ESEEIAELQQAVVEELGISMEELRHFIDEELEKMDCVQQRKKQLAEL). The segment at 108–147 (RDSSSEDESSRPTEIIEIPDEDDDVLSIDSGDAGSRTPKD) is disordered. Ser-112 and Ser-117 each carry phosphoserine. Thr-120 is modified (phosphothreonine). Over residues 124-133 (EIPDEDDDVL) the composition is skewed to acidic residues. Lys-182 participates in a covalent cross-link: Glycyl lysine isopeptide (Lys-Gly) (interchain with G-Cter in SUMO2); alternate. Lys-182 is covalently cross-linked (Glycyl lysine isopeptide (Lys-Gly) (interchain with G-Cter in ubiquitin); alternate). 2 consecutive Tudor domains span residues 257–320 (KLYV…LKKT) and 347–403 (LLKS…SMKT). The segment at 404 to 545 (SSASALEKKQ…APAPSALPAP (142 aa)) is disordered. Residues 433-444 (QYTQDLTGTGTQ) show a composition bias toward polar residues. Residues 448 to 468 (VEPPQPTAPPAPPFPPAPPLS) are compositionally biased toward pro residues. Positions 477 to 515 (ESQLAQSRKQVAKKSTSFRPGSVGSGHSSPTSPALSENV) are enriched in polar residues. A compositionally biased stretch (low complexity) spans 528–539 (SPLGSTASAPAP). An MBD domain is found at 594 to 665 (YRGKNPLLVP…EMFCLDPYVL (72 aa)). The Pre-SET domain maps to 727–800 (VGCDCKDGCR…MCTNRLVQHG (74 aa)). Zn(2+) contacts are provided by Cys-729, Cys-731, Cys-735, Cys-741, Cys-743, Cys-781, Cys-785, Cys-787, and Cys-792. Residues 803–1266 (VRLQLFKTQN…AGTELTWDYN (464 aa)) form the SET domain. S-adenosyl-L-methionine contacts are provided by residues 813-815 (KGW), Asp-851, and Tyr-853. A Glycyl lysine isopeptide (Lys-Gly) (interchain with G-Cter in ubiquitin) cross-link involves residue Lys-867. A disordered region spans residues 868–1160 (EGYESDAPCS…MTGPMKRQVA (293 aa)). The segment covering 896–907 (EDPEESNDDSSD) has biased composition (acidic residues). Residues 951–963 (DLGPPHIPVPPSI) are compositionally biased toward pro residues. Ser-1025 bears the Phosphoserine mark. The segment covering 1031 to 1050 (IKDEGDIKQAKKEDTDDRNK) has biased composition (basic and acidic residues). Residue Lys-1032 forms a Glycyl lysine isopeptide (Lys-Gly) (interchain with G-Cter in SUMO2); alternate linkage. A Glycyl lysine isopeptide (Lys-Gly) (interchain with G-Cter in SUMO1); alternate cross-link involves residue Lys-1032. Lys-1038 is covalently cross-linked (Glycyl lysine isopeptide (Lys-Gly) (interchain with G-Cter in SUMO2)). A compositionally biased stretch (polar residues) spans 1052-1063 (SVVTESSRNYGY). Ser-1066 is subject to Phosphoserine. Lys-1069 is covalently cross-linked (Glycyl lysine isopeptide (Lys-Gly) (interchain with G-Cter in SUMO2)). The segment covering 1100 to 1115 (LTLSSSTESEGESGTS) has biased composition (low complexity). The segment covering 1116-1140 (RKPTAGQTSATAVDSDDIQTISSGS) has biased composition (polar residues). A Glycyl lysine isopeptide (Lys-Gly) (interchain with G-Cter in SUMO2) cross-link involves residue Lys-1149. Residues Lys-1170 and Lys-1178 each carry the N6,N6,N6-trimethyllysine; alternate modification. Lys-1170 and Lys-1178 each carry N6,N6-dimethyllysine; alternate. Residues Arg-1220 and 1223–1224 (NH) each bind S-adenosyl-L-methionine. Residues Cys-1226, Cys-1279, Cys-1281, and Cys-1286 each contribute to the Zn(2+) site. In terms of domain architecture, Post-SET spans 1275-1291 (KELLCCCGAIECRGRLL).

The protein belongs to the class V-like SAM-binding methyltransferase superfamily. Histone-lysine methyltransferase family. Suvar3-9 subfamily. In terms of assembly, part of a complex containing at least CDYL, REST, WIZ, SETDB1, EHMT1 and EHMT2. Forms a complex with ATRX, TRIM28 and ZNF274. Probably part of a corepressor complex containing ZNF304, TRIM28, SETDB1 and DNMT1. Interacts with TRIM28/TIF1B. Interacts with ATF7IP and ATF7IP2; the interaction with ATF7IP protects SETDB1 from proteasomal degradation and is required to stimulate histone methyltransferase activity and facilitate the conversion of dimethylated to trimethylated H3 'Lys-9'. Interacts with CBX1 and CBX5. Interacts with DNMT3A and DNMT3B. Interacts with SUMO2. Interacts with MPHOSPH8. Interacts with ERG. Interacts with HDAC1, HDAC2, SIN3A and SIN3B. Interacts with ATRX. Interacts with RESF1. Interacts with ZNF638. Interacts with TASOR. Interacts with ZNF263; recruited to the SIX3 promoter along with other proteins involved in chromatin modification and transcriptional corepression where it contributes to transcriptional repression. Interacts with PHF13; the interaction probably enhances SETDB1 chromatin-associated levels and activity. Interacts with VRK1. Degraded by the proteasome, shielded by interaction with ATF7IP. Post-translationally, monoubiquitinated at Lys-867 by E2 enzymes of the UBE2E family. The conjugated-Ub is protected from deubiquitination by the SET domain. Monoubiquitination at Lys-867 is required for catalytic activity, H3K9 methylation and endogenous retrovirus silencing. As to expression, widely expressed. High expression in testis.

The protein localises to the nucleus. The protein resides in the cytoplasm. It localises to the chromosome. The enzyme catalyses N(6),N(6)-dimethyl-L-lysyl(9)-[histone H3] + S-adenosyl-L-methionine = N(6),N(6),N(6)-trimethyl-L-lysyl(9)-[histone H3] + S-adenosyl-L-homocysteine + H(+). Functionally, histone methyltransferase that specifically trimethylates 'Lys-9' of histone H3. H3 'Lys-9' trimethylation represents a specific tag for epigenetic transcriptional repression by recruiting HP1 (CBX1, CBX3 and/or CBX5) proteins to methylated histones. Mainly functions in euchromatin regions, thereby playing a central role in the silencing of euchromatic genes. H3 'Lys-9' trimethylation is coordinated with DNA methylation. Required for HUSH-mediated heterochromatin formation and gene silencing. Forms a complex with MBD1 and ATF7IP that represses transcription and couples DNA methylation and histone 'Lys-9' trimethylation. Its activity is dependent on MBD1 and is heritably maintained through DNA replication by being recruited by CAF-1. SETDB1 is targeted to histone H3 by TRIM28/TIF1B, a factor recruited by KRAB zinc-finger proteins. Probably forms a corepressor complex required for activated KRAS-mediated promoter hypermethylation and transcriptional silencing of tumor suppressor genes (TSGs) or other tumor-related genes in colorectal cancer (CRC) cells. Required to maintain a transcriptionally repressive state of genes in undifferentiated embryonic stem cells (ESCs). In ESCs, in collaboration with TRIM28, is also required for H3K9me3 and silencing of endogenous and introduced retroviruses in a DNA-methylation independent-pathway. Associates at promoter regions of tumor suppressor genes (TSGs) leading to their gene silencing. The SETDB1-TRIM28-ZNF274 complex may play a role in recruiting ATRX to the 3'-exons of zinc-finger coding genes with atypical chromatin signatures to establish or maintain/protect H3K9me3 at these transcriptionally active regions. The protein is Histone-lysine N-methyltransferase SETDB1 of Homo sapiens (Human).